A 130-amino-acid chain; its full sequence is Small ribosomal subunit protein uS9 (130 aa).

This sequence belongs to the universal ribosomal protein uS9 family.

The sequence is that of Small ribosomal subunit protein uS9 from Herminiimonas arsenicoxydans.